The primary structure comprises 414 residues: Mannan endo-1,4-beta-mannosidase 3 (414 aa).

An N-terminal signal peptide occupies residues 1 to 19 (MKCLCFVVLLAILIAQNSS). 2 N-linked (GlcNAc...) asparagine glycosylation sites follow: Asn17 and Asn75. Trp87 is a binding site for substrate. Residues Asn133 and Asn153 are each glycosylated (N-linked (GlcNAc...) asparagine). Asn202 lines the substrate pocket. Catalysis depends on Glu203, which acts as the Proton donor. Tyr283 is a binding site for substrate. Glu323 serves as the catalytic Nucleophile. Asn343 carries N-linked (GlcNAc...) asparagine glycosylation. Trp365 contributes to the substrate binding site. Asn386 carries an N-linked (GlcNAc...) asparagine glycan.

This sequence belongs to the glycosyl hydrolase 5 (cellulase A) family. In terms of tissue distribution, expressed in leaves, flowers, siliques and seeds.

The protein resides in the secreted. The enzyme catalyses Random hydrolysis of (1-&gt;4)-beta-D-mannosidic linkages in mannans, galactomannans and glucomannans.. This Arabidopsis thaliana (Mouse-ear cress) protein is Mannan endo-1,4-beta-mannosidase 3 (MAN3).